A 354-amino-acid polypeptide reads, in one-letter code: Nucleoporin seh1 (354 aa).

WD repeat units lie at residues 10-49, 55-96, 112-153, 161-209, 216-259, and 270-309; these read DHKD…KWNV, AHSG…KVSS, DSRT…NLSQ, SNKL…RKCV, DITD…TDIS, and EHNC…QWRC.

Belongs to the WD repeat SEC13 family. Probable component of the nuclear pore complex (NPC). Component of the GATOR complex consisting of mio, Nup44A/Seh1, Im11, Nplr3, Nplr2, Wdr24, Wdr59 and Sec13. Within the GATOR complex, probable component of the GATOR2 subcomplex which is likely composed of mio, Nup44A/Seh1, Wdr24, Wdr59 and Sec13. Interacts with mio. Interacts with Wdr24. The GATOR2 complex associates with unmet in the absence of S-adenosyl-L-methionine; the mio-Wdr24-Nup44A subcomplex is essential and sufficient for this interaction while Wdr59 and Sec13 are dispensable. This association acts as a nutrient sensor to inhibit mTORC1 signaling in the absence of methionine. Expressed in ovarian cysts.

The protein resides in the nucleus envelope. It is found in the lysosome. Probable component of the nuclear pore complex (NPC). Involved in maintaining the localization of another nucleoporin Mgtor to the nuclear envelope of early meiotic female germline cells. It is not involved in recruiting the nucleoporins Mgtor, Nup107, Nup153 and FG-containing nucleoporins to the NPC. Its function is as follows. An essential component of the GATOR subcomplex GATOR2 which functions as an activator of the amino acid-sensing branch of the mTORC1 signaling pathway. The two GATOR subcomplexes, GATOR1 and GATOR2, regulate the mTORC1 pathway in order to mediate metabolic homeostasis, female gametogenesis and the response to amino acid limitation and complete starvation. GATOR2 activates the mTORC1 signaling pathway through the inhibition of the GATOR1 subcomplex, controlling the switch to cell proliferation growth under nutrient replete conditions and growth during female oocyte development. This component is required for activating mTORC1 specifically in germline cells to promote cell growth and maintain the oocyte fate, probably influences the organization and/or function of microtubules within ovarian cysts, and promotes accumulation of another GATOR2 complex member mio in germline and somatic tissues. GATOR1 and GATOR2 act at different stages of oogenesis to regulate mTORC1 in order to control meiotic entry and promote oocyte growth and development. After exactly four mitotic cyst divisions, the GATOR1 complex members (Iml1, Nprl2 and Nprl3) down-regulate mTORC1 to slow cellular metabolism and promote the mitotic/meiotic transition. At later stages of oogenesis, the mio and Nup44A components of the GATOR2 complex inhibit GATOR1 and thus activate mTORC1 to promote meiotic progression, and drive oocyte growth and development. In addition to its role in the regulation of the mTORC1 complex, functions independently of mTORC1 to prevent the inappropriate accumulation of autolysosomes in germline tissues. This chain is Nucleoporin seh1, found in Drosophila melanogaster (Fruit fly).